The sequence spans 861 residues: Transcription factor opdJ (861 aa).

Positions C11 to C37 form a DNA-binding region, zn(2)-C6 fungal-type.

Its subcellular location is the nucleus. Its function is as follows. Transcription factor that positively regulates the gene cluster that mediates the biosynthesis of oxopyrrolidines, polyketide-amino acid hybrid compounds with feature structures of tetramic acid. The sequence is that of Transcription factor opdJ from Penicillium oxalicum (strain 114-2 / CGMCC 5302) (Penicillium decumbens).